Here is a 227-residue protein sequence, read N- to C-terminus: MLTGGALWVDAWLWRGPMLTLAVGGLAFVLYFFRDPERTPPADALEAGIVAPADGRVVEIAEEDDPLYLEGPARRISIFLSPLDVHVNRVPARGVIEHAEYRPGDYLVAWHPKASEKNERSEFGLRHPTGTKLLFKQIAGAVARRIEYDLREGDTVETGARFGIVKFGSRMDLLVPPSVELHAKEGQVVRAGTTVLGRIPTPESGRSSSAEATAAPSASSARRSSAS.

The Schiff-base intermediate with substrate; via pyruvic acid role is filled by Ser169. Ser169 carries the pyruvic acid (Ser); by autocatalysis modification. A disordered region spans residues 197-227 (GRIPTPESGRSSSAEATAAPSASSARRSSAS). The span at 206–227 (RSSSAEATAAPSASSARRSSAS) shows a compositional bias: low complexity.

This sequence belongs to the phosphatidylserine decarboxylase family. PSD-A subfamily. In terms of assembly, heterodimer of a large membrane-associated beta subunit and a small pyruvoyl-containing alpha subunit. Pyruvate is required as a cofactor. In terms of processing, is synthesized initially as an inactive proenzyme. Formation of the active enzyme involves a self-maturation process in which the active site pyruvoyl group is generated from an internal serine residue via an autocatalytic post-translational modification. Two non-identical subunits are generated from the proenzyme in this reaction, and the pyruvate is formed at the N-terminus of the alpha chain, which is derived from the carboxyl end of the proenzyme. The post-translation cleavage follows an unusual pathway, termed non-hydrolytic serinolysis, in which the side chain hydroxyl group of the serine supplies its oxygen atom to form the C-terminus of the beta chain, while the remainder of the serine residue undergoes an oxidative deamination to produce ammonia and the pyruvoyl prosthetic group on the alpha chain.

The protein resides in the cell membrane. The catalysed reaction is a 1,2-diacyl-sn-glycero-3-phospho-L-serine + H(+) = a 1,2-diacyl-sn-glycero-3-phosphoethanolamine + CO2. It functions in the pathway phospholipid metabolism; phosphatidylethanolamine biosynthesis; phosphatidylethanolamine from CDP-diacylglycerol: step 2/2. In terms of biological role, catalyzes the formation of phosphatidylethanolamine (PtdEtn) from phosphatidylserine (PtdSer). The sequence is that of Phosphatidylserine decarboxylase proenzyme from Salinibacter ruber (strain DSM 13855 / M31).